A 27-amino-acid polypeptide reads, in one-letter code: Flagellar filament 34 kDa core protein (27 aa).

Belongs to the bacterial flagellin family. As to quaternary structure, the flagellum consists of an outer layer composed of repeating units of FlaA around a core that contains one or all of five antigenically related polypeptides.

It localises to the periplasmic flagellum. Its subcellular location is the periplasm. Functionally, component of the core of the flagella. In Spirochaeta aurantia, this protein is Flagellar filament 34 kDa core protein.